The primary structure comprises 285 residues: Diphthine methyl ester synthase (285 aa).

S-adenosyl-L-methionine-binding positions include Leu-9, Asp-84, Gly-87, 112–113 (SI), and Leu-163. Ser-171 is subject to Phosphoserine. S-adenosyl-L-methionine contacts are provided by Val-225 and His-250.

This sequence belongs to the diphthine synthase family.

The catalysed reaction is 2-[(3S)-amino-3-carboxypropyl]-L-histidyl-[translation elongation factor 2] + 4 S-adenosyl-L-methionine = diphthine methyl ester-[translation elongation factor 2] + 4 S-adenosyl-L-homocysteine + 3 H(+). It functions in the pathway protein modification; peptidyl-diphthamide biosynthesis. In terms of biological role, S-adenosyl-L-methionine-dependent methyltransferase that catalyzes four methylations of the modified target histidine residue in translation elongation factor 2 (EF-2), to form an intermediate called diphthine methyl ester. The four successive methylation reactions represent the second step of diphthamide biosynthesis. This chain is Diphthine methyl ester synthase (DPH5), found in Bos taurus (Bovine).